Reading from the N-terminus, the 217-residue chain is Probable transaldolase (217 aa).

Lys83 functions as the Schiff-base intermediate with substrate in the catalytic mechanism.

It belongs to the transaldolase family. Type 3B subfamily.

It is found in the cytoplasm. The enzyme catalyses D-sedoheptulose 7-phosphate + D-glyceraldehyde 3-phosphate = D-erythrose 4-phosphate + beta-D-fructose 6-phosphate. It functions in the pathway carbohydrate degradation; pentose phosphate pathway; D-glyceraldehyde 3-phosphate and beta-D-fructose 6-phosphate from D-ribose 5-phosphate and D-xylulose 5-phosphate (non-oxidative stage): step 2/3. Its function is as follows. Transaldolase is important for the balance of metabolites in the pentose-phosphate pathway. The sequence is that of Probable transaldolase from Bartonella bacilliformis (strain ATCC 35685 / KC583 / Herrer 020/F12,63).